The sequence spans 555 residues: T-complex protein 1 subunit gamma (555 aa).

Residues 527 to 555 (KKKQAPGSGPSKPTIETEGDADNEQILPD) form a disordered region.

This sequence belongs to the TCP-1 chaperonin family. As to quaternary structure, heterooligomeric complex of about 850 to 900 kDa that forms two stacked rings, 12 to 16 nm in diameter. Interacts with CCT8.

The protein localises to the cytoplasm. Its function is as follows. Molecular chaperone; assists the folding of proteins upon ATP hydrolysis. Known to play a role, in vitro, in the folding of actin and tubulin. This is T-complex protein 1 subunit gamma from Arabidopsis thaliana (Mouse-ear cress).